The following is a 222-amino-acid chain: Small ribosomal subunit protein eS1 (222 aa).

The protein belongs to the eukaryotic ribosomal protein eS1 family.

This Pyrobaculum calidifontis (strain DSM 21063 / JCM 11548 / VA1) protein is Small ribosomal subunit protein eS1.